Reading from the N-terminus, the 376-residue chain is Arsenite methyltransferase (376 aa).

Serine 47 and serine 336 each carry phosphoserine. The segment covering 354–363 (SDKMKPRHAP) has biased composition (basic and acidic residues). The interval 354 to 376 (SDKMKPRHAPEGTGGCCGKRKNC) is disordered.

The protein belongs to the methyltransferase superfamily. Arsenite methyltransferase family.

The protein localises to the cytoplasm. The protein resides in the cytosol. It carries out the reaction arsenic triglutathione + [thioredoxin]-dithiol + S-adenosyl-L-methionine + 2 H2O = methylarsonous acid + [thioredoxin]-disulfide + 3 glutathione + S-adenosyl-L-homocysteine + H(+). The enzyme catalyses arsenic triglutathione + 2 [thioredoxin]-dithiol + 2 S-adenosyl-L-methionine + H2O = dimethylarsinous acid + 2 [thioredoxin]-disulfide + 3 glutathione + 2 S-adenosyl-L-homocysteine + 2 H(+). It catalyses the reaction arsenic triglutathione + 3 [thioredoxin]-dithiol + 3 S-adenosyl-L-methionine = trimethylarsine + 3 [thioredoxin]-disulfide + 3 glutathione + 3 S-adenosyl-L-homocysteine + 3 H(+). Catalyzes the transfer of a methyl group from AdoMet to trivalent arsenicals producing methylated and dimethylated arsenicals. It methylates arsenite to form methylarsonate, Me-AsO(3)H(2), which is reduced by methylarsonate reductase to methylarsonite, Me-As(OH)2. Methylarsonite is also a substrate and it is converted into the much less toxic compound dimethylarsinate (cacodylate), Me(2)As(O)-OH. The chain is Arsenite methyltransferase (As3mt) from Mus musculus (Mouse).